Consider the following 435-residue polypeptide: Enolase (435 aa).

Residue Gln-167 participates in (2R)-2-phosphoglycerate binding. The active-site Proton donor is the Glu-209. Mg(2+) is bound by residues Asp-246, Glu-292, and Asp-319. 4 residues coordinate (2R)-2-phosphoglycerate: Lys-344, Arg-373, Ser-374, and Lys-395. Residue Lys-344 is the Proton acceptor of the active site.

The protein belongs to the enolase family. The cofactor is Mg(2+).

It localises to the cytoplasm. The protein resides in the secreted. Its subcellular location is the cell surface. The enzyme catalyses (2R)-2-phosphoglycerate = phosphoenolpyruvate + H2O. It functions in the pathway carbohydrate degradation; glycolysis; pyruvate from D-glyceraldehyde 3-phosphate: step 4/5. In terms of biological role, catalyzes the reversible conversion of 2-phosphoglycerate (2-PG) into phosphoenolpyruvate (PEP). It is essential for the degradation of carbohydrates via glycolysis. The polypeptide is Enolase (Lachnospira eligens (strain ATCC 27750 / DSM 3376 / VPI C15-48 / C15-B4) (Eubacterium eligens)).